Here is an 89-residue protein sequence, read N- to C-terminus: Small ribosomal subunit protein uS15 (89 aa).

Residues 1 to 21 (MAISQERKNEIIKEYARHEGD) are compositionally biased toward basic and acidic residues. A disordered region spans residues 1–24 (MAISQERKNEIIKEYARHEGDTGS).

The protein belongs to the universal ribosomal protein uS15 family. As to quaternary structure, part of the 30S ribosomal subunit. Forms a bridge to the 50S subunit in the 70S ribosome, contacting the 23S rRNA.

In terms of biological role, one of the primary rRNA binding proteins, it binds directly to 16S rRNA where it helps nucleate assembly of the platform of the 30S subunit by binding and bridging several RNA helices of the 16S rRNA. Its function is as follows. Forms an intersubunit bridge (bridge B4) with the 23S rRNA of the 50S subunit in the ribosome. In Enterococcus faecalis (strain ATCC 700802 / V583), this protein is Small ribosomal subunit protein uS15.